An 840-amino-acid polypeptide reads, in one-letter code: Protein argonaute-2 (840 aa).

Residues 210-329 enclose the PAZ domain; sequence PVIEFVCEVL…LPLEVCNIVA (120 aa). S368 bears the Phosphoserine mark. Residues 498–799 form the Piwi domain; that stretch reads LVVVILPGKT…VAFRARYHLV (302 aa). The a divalent metal cation site is built by D578 and D650. At P681 the chain carries 4-hydroxyproline. H788 is an a divalent metal cation binding site. Phosphoserine occurs at positions 805, 809, 812, and 815.

It belongs to the argonaute family. Ago subfamily. Interacts with DICER1 through its Piwi domain and with TARBP2 during assembly of the RNA-induced silencing complex (RISC). Together, DICER1, AGO2 and TARBP2 constitute the trimeric RISC loading complex (RLC), or micro-RNA (miRNA) loading complex (miRLC). Within the RLC/miRLC, DICER1 and TARBP2 are required to process precursor miRNAs (pre-miRNAs) to mature miRNAs and then load them onto AGO2. AGO2 bound to the mature miRNA constitutes the minimal RISC and may subsequently dissociate from DICER1 and TARBP2. Note however that the term RISC has also been used to describe the trimeric RLC/miRLC. The formation of RISC complexes containing siRNAs rather than miRNAs appears to occur independently of DICER1. Interacts with AGO1. Also interacts with DDB1, DDX5, DDX6, DDX20, DHX30, DHX36, DDX47, DHX9, ELAVL, FXR1, GEMIN4, HNRNPF, IGF2BP1, ILF3, IMP8, MATR3, PABPC1, PRMT5, P4HA1, P4HB, RBM4, SART3, TNRC6A, TNRC6B, UPF1 and YBX1. Interacts with the P-body components DCP1A and XRN1. Associates with polysomes and messenger ribonucleoproteins (mNRPs). Interacts with RBM4; the interaction is modulated under stress-induced conditions, occurs under both cell proliferation and differentiation conditions and in an RNA- and phosphorylation-independent manner. Interacts with LIMD1, WTIP and AJUBA. Interacts with TRIM71; the interaction increases in presence of RNA. Interacts with APOBEC3G in an RNA-dependent manner. Interacts with APOBEC3A, APOBEC3C, APOBEC3F and APOBEC3H. Interacts with DICER1, TARBP2, EIF6, MOV10 and RPL7A (60S ribosome subunit); they form a large RNA-induced silencing complex (RISC). Interacts with FMR1. Interacts with ZFP36. Interacts with RC3H1; the interaction is RNA independent. Found in a complex composed of AGO2, CHD7 and ARB2A. Interacts with SND1 and SYT11. Interacts with CLNK. Interacts with GARRE1. Hydroxylated. 4-hydroxylation appears to enhance protein stability but is not required for miRNA-binding or endonuclease activity. Post-translationally, ubiquitinated on surface-exposed lysines by a SCF-like E3 ubiquitin-protein ligase complex containing ZSWIM8 during target-directed microRNA degradation (TDMD), a process that mediates degradation of microRNAs (miRNAs). Ubiquitination by the SCF-like E3 ubiquitin-protein ligase complex containing ZSWIM8 leads to its subsequent degradation, thereby exposing miRNAs for degradation. ZSWIM8 recognizes and binds AGO2 when it is engaged with a TDMD target. In terms of processing, phosphorylation at Ser-368 by AKT3; leads to up-regulate translational repression of microRNA target and down-regulate endonucleolytic cleavage. A phosphorylation cycle of C-terminal serine cluster (Ser-805-Ser-815) regulates the release of target mRNAs. Target-binding leads to phosphorylation of these residues by CSNK1A1, which reduces the affinity of AGO2 for mRNA and enables target release. The ANKRD52-PPP6C phosphatase complex dephosphorylates the residues, which primes AGO2 for binding a new target.

Its subcellular location is the cytoplasm. The protein resides in the P-body. The protein localises to the nucleus. It carries out the reaction Endonucleolytic cleavage to 5'-phosphomonoester.. Functionally, required for RNA-mediated gene silencing (RNAi) by the RNA-induced silencing complex (RISC). The 'minimal RISC' appears to include AGO2 bound to a short guide RNA such as a microRNA (miRNA) or short interfering RNA (siRNA). These guide RNAs direct RISC to complementary mRNAs that are targets for RISC-mediated gene silencing. The precise mechanism of gene silencing depends on the degree of complementarity between the miRNA or siRNA and its target. Binding of RISC to a perfectly complementary mRNA generally results in silencing due to endonucleolytic cleavage of the mRNA specifically by AGO2. Binding of RISC to a partially complementary mRNA results in silencing through inhibition of translation, and this is independent of endonuclease activity. May inhibit translation initiation by binding to the 7-methylguanosine cap, thereby preventing the recruitment of the translation initiation factor eIF4-E. May also inhibit translation initiation via interaction with EIF6, which itself binds to the 60S ribosomal subunit and prevents its association with the 40S ribosomal subunit. The inhibition of translational initiation leads to the accumulation of the affected mRNA in cytoplasmic processing bodies (P-bodies), where mRNA degradation may subsequently occur. In some cases RISC-mediated translational repression is also observed for miRNAs that perfectly match the 3' untranslated region (3'-UTR). Can also up-regulate the translation of specific mRNAs under certain growth conditions. Binds to the AU element of the 3'-UTR of the TNF (TNF-alpha) mRNA and up-regulates translation under conditions of serum starvation. Also required for transcriptional gene silencing (TGS), in which short RNAs known as antigene RNAs or agRNAs direct the transcriptional repression of complementary promoter regions. This chain is Protein argonaute-2 (AGO2), found in Oryctolagus cuniculus (Rabbit).